A 226-amino-acid chain; its full sequence is Fibrillarin-like rRNA/tRNA 2'-O-methyltransferase (226 aa).

Residues 82–83, 100–101, 125–126, and 145–148 contribute to the S-adenosyl-L-methionine site; these read TT, EF, DA, and DVAQ.

Belongs to the methyltransferase superfamily. Fibrillarin family. In terms of assembly, interacts with nop5. Component of box C/D small ribonucleoprotein (sRNP) particles that contain rpl7ae, FlpA and nop5, plus a guide RNA.

In terms of biological role, involved in pre-rRNA and tRNA processing. Utilizes the methyl donor S-adenosyl-L-methionine to catalyze the site-specific 2'-hydroxyl methylation of ribose moieties in rRNA and tRNA. Site specificity is provided by a guide RNA that base pairs with the substrate. Methylation occurs at a characteristic distance from the sequence involved in base pairing with the guide RNA. The sequence is that of Fibrillarin-like rRNA/tRNA 2'-O-methyltransferase from Methanosarcina barkeri (strain Fusaro / DSM 804).